A 433-amino-acid polypeptide reads, in one-letter code: Enolase (433 aa).

Gln-163 contacts (2R)-2-phosphoglycerate. Catalysis depends on Glu-205, which acts as the Proton donor. Residues Asp-242, Glu-291, and Asp-318 each coordinate Mg(2+). Residues Lys-343, Arg-372, Ser-373, and Lys-394 each coordinate (2R)-2-phosphoglycerate. Lys-343 acts as the Proton acceptor in catalysis.

The protein belongs to the enolase family. Mg(2+) serves as cofactor.

It localises to the cytoplasm. The protein resides in the secreted. It is found in the cell surface. The catalysed reaction is (2R)-2-phosphoglycerate = phosphoenolpyruvate + H2O. It participates in carbohydrate degradation; glycolysis; pyruvate from D-glyceraldehyde 3-phosphate: step 4/5. Its function is as follows. Catalyzes the reversible conversion of 2-phosphoglycerate (2-PG) into phosphoenolpyruvate (PEP). It is essential for the degradation of carbohydrates via glycolysis. The chain is Enolase from Methylibium petroleiphilum (strain ATCC BAA-1232 / LMG 22953 / PM1).